We begin with the raw amino-acid sequence, 635 residues long: Cationic amino acid transporter 4 (635 aa).

3 helical membrane passes run 42–62 (LTLL…TGAV), 66–86 (VAGP…LLAA), and 113–133 (LWAF…GAAV). N-linked (GlcNAc...) asparagine glycans are attached at residues Asn151 and Asn195. A helical transmembrane segment spans residues 197–217 (TFSAISLLVILFIVILGFILA). The N-linked (GlcNAc...) asparagine glycan is linked to Asn221. The next 5 membrane-spanning stretches (helical) occupy residues 229–249 (FAPF…YAFV), 270–290 (LAIA…STVL), 318–338 (GFIV…SLLF), 365–385 (QVPV…ALLL), and 391–411 (VQFL…SIIV). A phosphoserine mark is found at Ser422 and Ser427. Residues 478–498 (VTWALGVMLASAITIGCVLVF) form a helical membrane-spanning segment. A glycan (N-linked (GlcNAc...) asparagine) is linked at Asn500. 3 helical membrane-spanning segments follow: residues 508 to 528 (WGYI…LLVL), 539 to 559 (LFQI…NICL), and 567 to 587 (TWVR…GYGI). The N-linked (GlcNAc...) asparagine glycan is linked to Asn601.

This sequence belongs to the amino acid-polyamine-organocation (APC) superfamily. Cationic amino acid transporter (CAT) (TC 2.A.3.3) family.

It is found in the membrane. In terms of biological role, involved in the transport of the cationic amino acids (arginine, lysine and ornithine). The chain is Cationic amino acid transporter 4 (SLC7A4) from Homo sapiens (Human).